The sequence spans 206 residues: SOSS complex subunit B2 (206 aa).

Positions 26 to 89 form a DNA-binding region, OB; it reads IVLEIGRVTK…SMWKGCLTLY (64 aa). Disordered stretches follow at residues 114 to 146 and 166 to 206; these read EPNP…GTGT and SYAG…AFKR. A compositionally biased stretch (polar residues) spans 181-196; that stretch reads LPGTANNQTVMTTISN.

The protein belongs to the SOSS-B family. SOSS-B2 subfamily. In terms of assembly, component of the SOSS complex, composed of SOSS-B (SOSS-B1/NABP2 or SOSS-B2/NABP1), SOSS-A/INTS3 and SOSS-C/INIP. SOSS complexes containing SOSS-B1/NABP2 are more abundant than complexes containing SOSS-B2/NABP1.

It is found in the nucleus. Its function is as follows. Component of the SOSS complex, a multiprotein complex that functions downstream of the MRN complex to promote DNA repair and G2/M checkpoint. In the SOSS complex, acts as a sensor of single-stranded DNA that binds to single-stranded DNA, in particular to polypyrimidines. The SOSS complex associates with DNA lesions and influences diverse endpoints in the cellular DNA damage response including cell-cycle checkpoint activation, recombinational repair and maintenance of genomic stability. Required for efficient homologous recombination-dependent repair of double-strand breaks (DSBs) and ATM-dependent signaling pathways. This chain is SOSS complex subunit B2 (NABP1), found in Bos taurus (Bovine).